The primary structure comprises 208 residues: N-(5'-phosphoribosyl)anthranilate isomerase (208 aa).

This sequence belongs to the TrpF family.

It catalyses the reaction N-(5-phospho-beta-D-ribosyl)anthranilate = 1-(2-carboxyphenylamino)-1-deoxy-D-ribulose 5-phosphate. It functions in the pathway amino-acid biosynthesis; L-tryptophan biosynthesis; L-tryptophan from chorismate: step 3/5. The protein is N-(5'-phosphoribosyl)anthranilate isomerase of Dechloromonas aromatica (strain RCB).